A 336-amino-acid chain; its full sequence is uncharacterized protein (336 aa).

This is an uncharacterized protein from Mycoplasma capricolum subsp. capricolum (strain California kid / ATCC 27343 / NCTC 10154).